The following is a 251-amino-acid chain: Probable transcriptional regulatory protein RSal33209_2002 (251 aa).

The protein belongs to the TACO1 family.

It is found in the cytoplasm. This chain is Probable transcriptional regulatory protein RSal33209_2002, found in Renibacterium salmoninarum (strain ATCC 33209 / DSM 20767 / JCM 11484 / NBRC 15589 / NCIMB 2235).